The following is an 80-amino-acid chain: Translation initiation factor IF-1 (80 aa).

The S1-like domain maps to 6 to 80 (EKRKKEESDV…TSRGRIVYRK (75 aa)).

The protein belongs to the IF-1 family. As to quaternary structure, component of the 30S ribosomal translation pre-initiation complex which assembles on the 30S ribosome in the order IF-2 and IF-3, IF-1 and N-formylmethionyl-tRNA(fMet); mRNA recruitment can occur at any time during PIC assembly.

It is found in the cytoplasm. In terms of biological role, one of the essential components for the initiation of protein synthesis. Stabilizes the binding of IF-2 and IF-3 on the 30S subunit to which N-formylmethionyl-tRNA(fMet) subsequently binds. Helps modulate mRNA selection, yielding the 30S pre-initiation complex (PIC). Upon addition of the 50S ribosomal subunit IF-1, IF-2 and IF-3 are released leaving the mature 70S translation initiation complex. This is Translation initiation factor IF-1 from Deinococcus geothermalis (strain DSM 11300 / CIP 105573 / AG-3a).